The primary structure comprises 207 residues: ATP-dependent Clp protease proteolytic subunit (207 aa).

Catalysis depends on Ser111, which acts as the Nucleophile. Residue His136 is part of the active site.

Belongs to the peptidase S14 family. As to quaternary structure, fourteen ClpP subunits assemble into 2 heptameric rings which stack back to back to give a disk-like structure with a central cavity, resembling the structure of eukaryotic proteasomes.

The protein resides in the cytoplasm. It catalyses the reaction Hydrolysis of proteins to small peptides in the presence of ATP and magnesium. alpha-casein is the usual test substrate. In the absence of ATP, only oligopeptides shorter than five residues are hydrolyzed (such as succinyl-Leu-Tyr-|-NHMec, and Leu-Tyr-Leu-|-Tyr-Trp, in which cleavage of the -Tyr-|-Leu- and -Tyr-|-Trp bonds also occurs).. In terms of biological role, cleaves peptides in various proteins in a process that requires ATP hydrolysis. Has a chymotrypsin-like activity. Plays a major role in the degradation of misfolded proteins. The chain is ATP-dependent Clp protease proteolytic subunit from Yersinia pseudotuberculosis serotype O:1b (strain IP 31758).